A 496-amino-acid chain; its full sequence is Cytochrome P450 monooxygenase claT (496 aa).

The helical transmembrane segment at 2–22 (LSLIVEATLLLVVLVLSAHYV) threads the bilayer. C423 lines the heme pocket.

The protein belongs to the cytochrome P450 family. The cofactor is heme.

It is found in the membrane. It catalyses the reaction wigandol + 4 reduced [NADPH--hemoprotein reductase] + 4 O2 = arnebinol A + 4 oxidized [NADPH--hemoprotein reductase] + 6 H2O + 4 H(+). The catalysed reaction is arnebinol A + reduced [NADPH--hemoprotein reductase] + O2 = clavilactone A + oxidized [NADPH--hemoprotein reductase] + H2O + H(+). The enzyme catalyses (2E)-geranylhydroquinone + reduced [NADPH--hemoprotein reductase] + O2 = isoalliodorol + oxidized [NADPH--hemoprotein reductase] + H2O + H(+). Its pathway is secondary metabolite biosynthesis; terpenoid biosynthesis. Functionally, cytochrome P450 monooxygenase; part of the gene cluster that mediates the biosynthesis of clavilactone A, a meroterpenoid that features a unique benzo-fused ten-membered carbocyclic ring unit with an alpha,beta-epoxy-gamma-lactone moiety, forming an intriguing 10/5/3 tricyclic nested skeleton. ClaR, ClaS and ClaT are sufficient to produce clavilactone A. Within the pathway, claT acts as a multifunctional cytochrome P450 monooxygenase that catalyzes a ten-electron oxidation to accomplish the biosynthesis of the 10/5/3 tricyclic nested skeleton in clavilactones. The biosynthesis begins with the prenyltransferase claS that transfers geranyl pyrophosphate (GPP) to hydroquinone to produces geranylhydroquinone. The cytochrome P450 monooxygenase claR then catalyzes the diradical coupling reaction between the intramolecular hydroquinone and allyl moieties to form the benzo-fused ten-membered carbocyclic ring unit of wigantol. Finally the cytochrome P450 monooxygenase claT exquisitely and stereoselectively assembles the alpha,beta-epoxy-gamma-lactone moiety, producing clavilactone A via arnebinol A. This chain is Cytochrome P450 monooxygenase claT, found in Ampulloclitocybe clavipes (Club foot).